We begin with the raw amino-acid sequence, 963 residues long: Vacuolar membrane protease (963 aa).

Residues 1–15 (MVSSRRGFNPIAFTP) lie on the Cytoplasmic side of the membrane. A helical transmembrane segment spans residues 16 to 36 (WPVTILTSLVYLALIIPIIVV). At 37 to 391 (HHLVPPAPKQ…FQLNTLFGLS (355 aa)) the chain is on the vacuolar side. N-linked (GlcNAc...) asparagine glycosylation is found at Asn111 and Asn114. Zn(2+)-binding residues include His170 and Asp182. Residue Glu216 is the Proton acceptor of the active site. Zn(2+) is bound by residues Glu217, Glu242, and His315. The helical transmembrane segment at 392-412 (VALLVVAPLLLILTSVALFAV) threads the bilayer. Residues 413–441 (DKMYMFSMYTYLSESGGQVSLYGLRGMFR) are Cytoplasmic-facing. The helical transmembrane segment at 442-462 (FPLILGISTALTVALAFLIMK) threads the bilayer. Residues 463–473 (VNPFIIYSSPY) are Vacuolar-facing. Residues 474 to 494 (AVWSMMLSTCMFFAWFISCVA) form a helical membrane-spanning segment. The Cytoplasmic segment spans residues 495 to 504 (DFARPSALHR). A helical membrane pass occupies residues 505–525 (AYAFSWMFGILWVFLVIATVY). The Vacuolar portion of the chain corresponds to 526–535 (QRQHGIASSY). The chain crosses the membrane as a helical span at residues 536 to 556 (FIVFYFAGVSVATWISYLELF). Over 557 to 668 (GLSTTQDYAR…WSIYLVSSAW (112 aa)) the chain is Cytoplasmic. Residues 569-618 (SRLSDRTPSSDSHLLAPSADELPSSGSVAGRDFNPEDVEDEEPTESTSLL) are disordered. A compositionally biased stretch (acidic residues) spans 603 to 612 (PEDVEDEEPT). Residues 669 to 689 (ILQFLLVAPIVLILLGQLGLF) traverse the membrane as a helical segment. Over 690-705 (LTSATYQIGADGGSQF) the chain is Vacuolar. Residues 706–726 (IIYIGIAVLSVLILLPLFPFI) traverse the membrane as a helical segment. Residues 727–732 (HRFTYH) are Cytoplasmic-facing. The helical transmembrane segment at 733–753 (IPTFMLFVLIGTLVYNLTAFP) threads the bilayer. At 754-963 (FSHNSRLKVA…LVEGSYSFKL (210 aa)) the chain is on the vacuolar side. The N-linked (GlcNAc...) asparagine glycan is linked to Asn835.

The protein belongs to the peptidase M28 family. The cofactor is Zn(2+).

The protein resides in the vacuole membrane. Its function is as follows. May be involved in vacuolar sorting and osmoregulation. The chain is Vacuolar membrane protease from Arthroderma gypseum (strain ATCC MYA-4604 / CBS 118893) (Microsporum gypseum).